A 221-amino-acid chain; its full sequence is Transmembrane protein 225B (221 aa).

Transmembrane regions follow at residues 14–34 (WAIV…VSIF), 77–97 (VFLL…MPFA), 109–129 (FVLA…LVLH), and 147–167 (VLWP…AGTI).

The protein localises to the membrane. This chain is Transmembrane protein 225B, found in Homo sapiens (Human).